A 348-amino-acid polypeptide reads, in one-letter code: N-acetyl-gamma-glutamyl-phosphate reductase (348 aa).

C151 is an active-site residue.

It belongs to the NAGSA dehydrogenase family. Type 1 subfamily.

The protein resides in the cytoplasm. The catalysed reaction is N-acetyl-L-glutamate 5-semialdehyde + phosphate + NADP(+) = N-acetyl-L-glutamyl 5-phosphate + NADPH + H(+). Its pathway is amino-acid biosynthesis; L-arginine biosynthesis; N(2)-acetyl-L-ornithine from L-glutamate: step 3/4. Functionally, catalyzes the NADPH-dependent reduction of N-acetyl-5-glutamyl phosphate to yield N-acetyl-L-glutamate 5-semialdehyde. The protein is N-acetyl-gamma-glutamyl-phosphate reductase of Lachnospira eligens (strain ATCC 27750 / DSM 3376 / VPI C15-48 / C15-B4) (Eubacterium eligens).